The sequence spans 137 residues: Probable 4-amino-4-deoxy-L-arabinose-phosphoundecaprenol flippase subunit ArnF (137 aa).

Over 1-5 (MNVPR) the chain is Cytoplasmic. The chain crosses the membrane as a helical span at residues 6–26 (GWLAALGSVLLVSAAQLGMRW). Residues 27 to 44 (GMSRLPLPEAWAGQTPEH) are Periplasmic-facing. Residues 45–65 (AALLAVALAVAAYAASLLCWL) form a helical membrane-spanning segment. The Cytoplasmic segment spans residues 66 to 76 (AALRHLPLGRA). The helical transmembrane segment at 77–97 (YSLLSASYALVYLLAASLPAF) threads the bilayer. Topologically, residues 98–100 (EET) are periplasmic. The chain crosses the membrane as a helical span at residues 101 to 121 (FTTGKTLGVGLVVLGVLTVNA). The Cytoplasmic portion of the chain corresponds to 122–137 (RRTAAAPAHHPSRKAL).

This sequence belongs to the ArnF family. As to quaternary structure, heterodimer of ArnE and ArnF.

Its subcellular location is the cell inner membrane. The protein operates within bacterial outer membrane biogenesis; lipopolysaccharide biosynthesis. Its function is as follows. Translocates 4-amino-4-deoxy-L-arabinose-phosphoundecaprenol (alpha-L-Ara4N-phosphoundecaprenol) from the cytoplasmic to the periplasmic side of the inner membrane. The sequence is that of Probable 4-amino-4-deoxy-L-arabinose-phosphoundecaprenol flippase subunit ArnF from Pseudomonas paraeruginosa (strain DSM 24068 / PA7) (Pseudomonas aeruginosa (strain PA7)).